The following is a 580-amino-acid chain: Amino-acid acetyltransferase, mitochondrial (580 aa).

One can recognise an N-acetyltransferase domain in the interval 403 to 560 (LTMQNLFDDK…NPRHKNGVVN (158 aa)).

Belongs to the acetyltransferase family.

Its subcellular location is the mitochondrion. The enzyme catalyses L-glutamate + acetyl-CoA = N-acetyl-L-glutamate + CoA + H(+). The protein operates within amino-acid biosynthesis; L-arginine biosynthesis; N(2)-acetyl-L-ornithine from L-glutamate: step 1/4. Its function is as follows. N-acetylglutamate synthase involved in arginine biosynthesis. The chain is Amino-acid acetyltransferase, mitochondrial (ARG2) from Candida dubliniensis (strain CD36 / ATCC MYA-646 / CBS 7987 / NCPF 3949 / NRRL Y-17841) (Yeast).